We begin with the raw amino-acid sequence, 310 residues long: 4-hydroxyproline 2-epimerase (310 aa).

The active-site Proton acceptor is the cysteine 88. Residues glycine 89–histidine 90, histidine 208, and aspartate 232 each bind substrate. Cysteine 236 functions as the Proton donor in the catalytic mechanism. Glycine 237 to threonine 238 is a substrate binding site.

This sequence belongs to the proline racemase family.

The enzyme catalyses trans-4-hydroxy-L-proline = cis-4-hydroxy-D-proline. In terms of biological role, catalyzes the epimerization of trans-4-hydroxy-L-proline (t4LHyp) to cis-4-hydroxy-D-proline (c4DHyp). Is likely involved in a degradation pathway that converts t4LHyp to alpha-ketoglutarate. Can also catalyze the dehydration of trans-3-hydroxy-L-proline (t3LHyp) to Delta(1)-pyrroline-2-carboxylate (Pyr2C), albeit with 42-fold lower efficiency. Displays no proline racemase activity. This Burkholderia thailandensis (strain ATCC 700388 / DSM 13276 / CCUG 48851 / CIP 106301 / E264) protein is 4-hydroxyproline 2-epimerase.